Consider the following 566-residue polypeptide: Glucose starvation modulator protein 1 (566 aa).

The segment at residues 20–48 (CVFCHQKHLQCSNERPCKNCVKRNIAHGC) is a DNA-binding region (zn(2)-C6 fungal-type). Disordered stretches follow at residues 65–93 (PGAVSNKQSTPRKKLKTGPVSTSVSPMDS) and 250–270 (KQASPSPSNTSTSENNTNTLS). Polar residues predominate over residues 83 to 93 (PVSTSVSPMDS). Positions 253–270 (SPSPSNTSTSENNTNTLS) are enriched in low complexity.

Belongs to the ERT1/acuK family.

It is found in the nucleus. Its function is as follows. Transcription factor which regulates nonfermentable carbon utilization. This is Glucose starvation modulator protein 1 (ZCF23) from Candida albicans (strain SC5314 / ATCC MYA-2876) (Yeast).